The primary structure comprises 97 residues: Putative defensin-like protein 227 (97 aa).

A signal peptide spans 1–26; sequence MKWATLFMVSCVLMFFVMNNINEVES. Intrachain disulfides connect Cys35/Cys97, Cys45/Cys76, Cys53/Cys91, and Cys74/Cys93.

This sequence belongs to the DEFL family.

The protein resides in the secreted. This Arabidopsis thaliana (Mouse-ear cress) protein is Putative defensin-like protein 227 (SCRL28).